We begin with the raw amino-acid sequence, 633 residues long: Probable potassium transport system protein Kup 2 (633 aa).

12 helical membrane passes run Phe18–Leu38, Leu61–Leu81, Val107–Ile127, Ile143–Phe163, Phe176–Ile196, Ala211–Leu231, Trp255–Leu275, Ala293–Ile313, Ile345–Phe365, Leu371–Phe391, Phe402–Ala422, and Asp429–Thr449.

Belongs to the HAK/KUP transporter (TC 2.A.72) family.

It is found in the cell inner membrane. It catalyses the reaction K(+)(in) + H(+)(in) = K(+)(out) + H(+)(out). Transport of potassium into the cell. Likely operates as a K(+):H(+) symporter. In Rhizobium etli (strain ATCC 51251 / DSM 11541 / JCM 21823 / NBRC 15573 / CFN 42), this protein is Probable potassium transport system protein Kup 2.